We begin with the raw amino-acid sequence, 119 residues long: Large ribosomal subunit protein uL22 (119 aa).

The protein belongs to the universal ribosomal protein uL22 family. Part of the 50S ribosomal subunit.

This protein binds specifically to 23S rRNA; its binding is stimulated by other ribosomal proteins, e.g. L4, L17, and L20. It is important during the early stages of 50S assembly. It makes multiple contacts with different domains of the 23S rRNA in the assembled 50S subunit and ribosome. In terms of biological role, the globular domain of the protein is located near the polypeptide exit tunnel on the outside of the subunit, while an extended beta-hairpin is found that lines the wall of the exit tunnel in the center of the 70S ribosome. This is Large ribosomal subunit protein uL22 from Rickettsia rickettsii (strain Iowa).